A 118-amino-acid polypeptide reads, in one-letter code: uncharacterized protein (118 aa).

The next 4 helical transmembrane spans lie at 12 to 32 (IISLVSLSVIFGAMLSGFATF), 39 to 59 (LMPHFASLMIAFILTLASLFI), 63 to 83 (IIGYLAIAFQVITPLTVCPTI), and 98 to 118 (SAHLALMGMMFILALGNVILF).

It is found in the cell membrane. This is an uncharacterized protein from Methanocaldococcus jannaschii (strain ATCC 43067 / DSM 2661 / JAL-1 / JCM 10045 / NBRC 100440) (Methanococcus jannaschii).